Here is a 142-residue protein sequence, read N- to C-terminus: MKTFVAKPETVKRDWYVVDAEGKTLGRLATEIARRLRGKHKPEYTPHVDTGDYIVVINAEKVAVTGNKAQGKMYYSHTGFPGGIKSISFEKLIAKKPEMVIQKAVKGMLPRGPLGRAMFRKLKVYAGTEHNHIAQQPKQLDI.

It belongs to the universal ribosomal protein uL13 family. Part of the 50S ribosomal subunit.

In terms of biological role, this protein is one of the early assembly proteins of the 50S ribosomal subunit, although it is not seen to bind rRNA by itself. It is important during the early stages of 50S assembly. This is Large ribosomal subunit protein uL13 from Idiomarina loihiensis (strain ATCC BAA-735 / DSM 15497 / L2-TR).